Here is a 302-residue protein sequence, read N- to C-terminus: 4-hydroxy-tetrahydrodipicolinate synthase (302 aa).

T46 is a binding site for pyruvate. Residue Y134 is the Proton donor/acceptor of the active site. The active-site Schiff-base intermediate with substrate is the K162. V204 is a pyruvate binding site.

It belongs to the DapA family. Homotetramer; dimer of dimers.

It is found in the cytoplasm. It catalyses the reaction L-aspartate 4-semialdehyde + pyruvate = (2S,4S)-4-hydroxy-2,3,4,5-tetrahydrodipicolinate + H2O + H(+). It participates in amino-acid biosynthesis; L-lysine biosynthesis via DAP pathway; (S)-tetrahydrodipicolinate from L-aspartate: step 3/4. Catalyzes the condensation of (S)-aspartate-beta-semialdehyde [(S)-ASA] and pyruvate to 4-hydroxy-tetrahydrodipicolinate (HTPA). This Xanthomonas campestris pv. campestris (strain ATCC 33913 / DSM 3586 / NCPPB 528 / LMG 568 / P 25) protein is 4-hydroxy-tetrahydrodipicolinate synthase.